The primary structure comprises 1901 residues: Methylcytosine dioxygenase tet3 (1901 aa).

The CXXC-type zinc finger occupies 58–99 (SNKKRKRCGVCVPCLRKEPCGACYNCVNRSTSHQICKMRKCE). The Zn(2+) site is built by Cys65, Cys68, Cys71, Cys77, Cys80, Cys83, Cys93, and Cys98. Disordered stretches follow at residues 434–455 (KNAL…KKSS), 602–658 (WWVP…EGSA), 751–787 (KDQC…QNDL), and 808–867 (DFSL…PVSR). 2 stretches are compositionally biased toward polar residues: residues 442–455 (SPRQ…KKSS) and 602–614 (WWVP…PVSK). Basic residues predominate over residues 640-652 (KPQRKQVQIKKPK). The span at 758–771 (STHDTSSSSGQGDS) shows a compositional bias: low complexity. The span at 847–867 (ENSTKPATHSNPALSNNPVSR) shows a compositional bias: polar residues. The Zn(2+) site is built by Cys957, Cys959, Cys1017, His1043, and Cys1045. A 2-oxoglutarate-binding site is contributed by Arg1085. Zn(2+)-binding residues include Cys1095, Cys1097, Cys1113, Cys1122, and Cys1182. Cys1198 lines the 2-oxoglutarate pocket. Residue His1204 coordinates Zn(2+). The Fe cation site is built by His1206 and Asp1208. His1240 lines the 2-oxoglutarate pocket. 4 disordered regions span residues 1282–1338 (SEPA…QQTK), 1457–1501 (YGSE…VETT), 1591–1624 (SNAP…PGKV), and 1680–1745 (SATP…DEEI). Over residues 1291–1325 (RQLEAKKAAAEKKKLQKEKLVSPDKTKQEPSDKKT) the composition is skewed to basic and acidic residues. Over residues 1326–1338 (CQQNPGVPQQQTK) the composition is skewed to polar residues. The segment covering 1465 to 1474 (SFRRSSEVPH) has biased composition (basic and acidic residues). Polar residues predominate over residues 1477–1487 (SLQNPSSQKSV). 2 stretches are compositionally biased toward polar residues: residues 1680–1693 (SATP…TPCS) and 1702–1719 (SFPN…SQNH). His1780 contributes to the Fe cation binding site. 1795–1797 (RIS) contacts 2-oxoglutarate.

The protein belongs to the TET family. Requires Fe(2+) as cofactor. Zn(2+) serves as cofactor.

It localises to the nucleus. It is found in the chromosome. It catalyses the reaction a 5-methyl-2'-deoxycytidine in DNA + 2-oxoglutarate + O2 = a 5-hydroxymethyl-2'-deoxycytidine in DNA + succinate + CO2. The catalysed reaction is a 5-hydroxymethyl-2'-deoxycytidine in DNA + 2-oxoglutarate + O2 = a 5-formyl-2'-deoxycytidine in DNA + succinate + CO2 + H2O. The enzyme catalyses a 5-formyl-2'-deoxycytidine in DNA + 2-oxoglutarate + O2 = a 5-carboxyl-2'-deoxycytidine in DNA + succinate + CO2 + H(+). Its function is as follows. Dioxygenase that catalyzes the conversion of the modified genomic base 5-methylcytosine (5mC) into 5-hydroxymethylcytosine (5hmC) and plays a key role in epigenetic chromatin reprogramming during embryonic development. Conversion of 5mC into 5hmC probably constitutes the first step in cytosine demethylation. Selectively binds to the promoter region of target genes and contributes to regulate the expression of numerous developmental genes, including pax6, rax, sox9 and six3. May also contribute to the regulation of target genes in ways that do not require its enzyme activity. The chain is Methylcytosine dioxygenase tet3 from Xenopus tropicalis (Western clawed frog).